Reading from the N-terminus, the 147-residue chain is Small ribosomal subunit protein uS12 (147 aa).

The protein belongs to the universal ribosomal protein uS12 family. Part of the 30S ribosomal subunit.

With S4 and S5 plays an important role in translational accuracy. Located at the interface of the 30S and 50S subunits. The polypeptide is Small ribosomal subunit protein uS12 (Methanococcus vannielii (strain ATCC 35089 / DSM 1224 / JCM 13029 / OCM 148 / SB)).